Here is a 532-residue protein sequence, read N- to C-terminus: Apoptosis-inducing factor 1, mitochondrial (532 aa).

A mitochondrion-targeting transit peptide spans 1-26 (MIRNLTKLTKFTIGNRFYQSSSKGRF). Residues 63-84 (STPSIDVKEKKSQPPKTKEDYQ) are disordered. An FAD-dependent oxidoreductase region spans residues 98-440 (YVIIGGGTAA…APYTYQPFFW (343 aa)). FAD-binding positions include 102-106 (GGGTA), 128-129 (KE), Arg-136, and Lys-141. Trp-160 serves as a coordination point for NAD(+). Positions 188 and 236 each coordinate FAD. NAD(+)-binding positions include 260 to 263 (GGFL), Glu-288, and Gly-353. Asp-392 provides a ligand contact to FAD. The Nuclear localization signal signature appears at 400-406 (SLGVRRR). NAD(+) is bound by residues 408 to 409 (EH), Trp-440, and Glu-450. FAD is bound by residues 409–410 (HH) and Trp-440.

The protein belongs to the FAD-dependent oxidoreductase family. It depends on FAD as a cofactor.

The protein localises to the mitochondrion. It localises to the cytoplasm. It is found in the nucleus. The enzyme catalyses A + NADH + H(+) = AH2 + NAD(+). Functionally, probable NADH oxidoreductase that acts as a caspase-independent mitochondrial effector of apoptotic cell death. This chain is Apoptosis-inducing factor 1, mitochondrial (aif), found in Dictyostelium discoideum (Social amoeba).